A 423-amino-acid chain; its full sequence is UPF0229 protein Psyr_4632 (423 aa).

The segment at 65 to 110 (HHGRGGKQTVVHPGNKEFTTGEHIARPQGGGGGKGPGKAGNSGEGM) is disordered. The span at 92-107 (QGGGGGKGPGKAGNSG) shows a compositional bias: gly residues.

Belongs to the UPF0229 family.

The sequence is that of UPF0229 protein Psyr_4632 from Pseudomonas syringae pv. syringae (strain B728a).